A 464-amino-acid chain; its full sequence is Glutamate decarboxylase beta (464 aa).

An N6-(pyridoxal phosphate)lysine modification is found at Lys-275.

The protein belongs to the group II decarboxylase family. Pyridoxal 5'-phosphate is required as a cofactor.

The catalysed reaction is L-glutamate + H(+) = 4-aminobutanoate + CO2. Its function is as follows. Converts internalized glutamate to GABA and increases the internal pH. Involved in glutamate-dependent acid resistance in gastric fluid. The protein is Glutamate decarboxylase beta (gadB) of Listeria innocua serovar 6a (strain ATCC BAA-680 / CLIP 11262).